Consider the following 207-residue polypeptide: Putative 3-methyladenine DNA glycosylase (207 aa).

Belongs to the DNA glycosylase MPG family.

This chain is Putative 3-methyladenine DNA glycosylase, found in Listeria monocytogenes serotype 4a (strain HCC23).